We begin with the raw amino-acid sequence, 266 residues long: Type III pantothenate kinase (266 aa).

6–13 (DAGNTNIV) is a binding site for ATP. Residue 107–110 (GADR) coordinates substrate. The active-site Proton acceptor is Asp109. Asp129 contacts K(+). An ATP-binding site is contributed by Thr132. Thr184 serves as a coordination point for substrate.

Belongs to the type III pantothenate kinase family. In terms of assembly, homodimer. NH4(+) serves as cofactor. It depends on K(+) as a cofactor.

It is found in the cytoplasm. It catalyses the reaction (R)-pantothenate + ATP = (R)-4'-phosphopantothenate + ADP + H(+). It participates in cofactor biosynthesis; coenzyme A biosynthesis; CoA from (R)-pantothenate: step 1/5. In terms of biological role, catalyzes the phosphorylation of pantothenate (Pan), the first step in CoA biosynthesis. The polypeptide is Type III pantothenate kinase (Acidiphilium cryptum (strain JF-5)).